Consider the following 266-residue polypeptide: Type II iodothyronine deiodinase (266 aa).

The Lumenal portion of the chain corresponds to 1-9; the sequence is MGLLSVDLL. A helical; Signal-anchor for type III membrane protein membrane pass occupies residues 10–34; the sequence is ITLQILPVFFSNCLFLALYDSVILL. At 35–266 the chain is on the cytoplasmic side; the sequence is KHVALLLSRS…KNFSKRUILD (232 aa). Sec130 is a catalytic residue. Non-standard amino acids (selenocysteine) are located at Sec130 and Sec263.

This sequence belongs to the iodothyronine deiodinase family. As to quaternary structure, predominantly monomer. Can form homodimers but homodimerization is not essential for enzyme activity. Interacts with USP20 and USP33. Interacts with MARCHF6. Ubiquitinated by MARCHF6, leading to its degradation by the proteasome. Deubiquitinated by USP20 and USP33. In terms of tissue distribution, expressed in cerebral cortex, cerebellum, pituitary gland, mostly in anterior pituitary gland, and pineal gland, as well as in brown adipose tissue (BAT).

Its subcellular location is the endoplasmic reticulum membrane. It catalyses the reaction 3,3',5-triiodo-L-thyronine + iodide + A + H(+) = L-thyroxine + AH2. The enzyme catalyses 3,3'-diiodo-L-thyronine + iodide + A + H(+) = 3,3',5'-triiodo-L-thyronine + AH2. The catalysed reaction is 3'-iodo-L-thyronine + iodide + A + H(+) = 3',5'-diiodo-L-thyronine + AH2. It carries out the reaction 3,3'-diiodothyronamine + iodide + A + H(+) = 3,3',5'-triiodothyronamine + AH2. It catalyses the reaction 3'-iodothyronamine + iodide + A + H(+) = 3',5'-diiodothyronamine + AH2. Plays a crucial role in the metabolism of thyroid hormones (TH) and has specific roles in TH activation and inactivation by deiodination. Catalyzes the deiodination of L-thyroxine (T4) to 3,5,3'-triiodothyronine (T3) and 3',5'-diiodothyronine (3',5'-T2) to 3'-monoiodothyronine (3'-T1) via outer-ring deiodination (ORD). Catalyzes the deiodination of 3,3',5'-triiodothyronine (rT3) to 3,3'-diiodothyronine (3,3'-T2) via ORD. Catalyzes the phenolic ring deiodinations of 3,3',5'-triiodothyronamine and 3',5'- diiodothyronamine. The polypeptide is Type II iodothyronine deiodinase (Dio2) (Rattus norvegicus (Rat)).